The following is a 361-amino-acid chain: uncharacterized protein (361 aa).

Phosphothreonine is present on Thr12.

It is found in the cytoplasm. It localises to the nucleus. This is an uncharacterized protein from Schizosaccharomyces pombe (strain 972 / ATCC 24843) (Fission yeast).